The chain runs to 1120 residues: MWLKPEEVLLKNALKLWLMERSNDYFVLQRRRGYGEEGGGGLTGLLVGTLDSVLDSTAKVAPFRILHQTPDSQVYLSIACGANREEITKHWDWLEQNIMKTLSVFDSNEDITNFVQGKIRGLIAEEGKHCFAKEDDPEKFREALLKFEKCFGLPEKEKLVTYYSCSYWKGRVPCQGWLYLSTNFLSFYSFLLGSEIKLIISWDEVSKLEKTSNVILTESIHVCSQGENHYFSMFLHINQTYLLMEQLANYAIRRLFDKETFDNDPVLYNPLQITKRGLENRAHSEQFNAFFRLPKGESLKEVHECFLWVPFSHFNTHGKMCISENYICFASQDGNQCSVIIPLREVLAIDKTNDSSKSVIISIKGKTAFRFHEVKDFEQLVAKLRLRCGAASTQYHDISTELAISSESTEPSDNFEVQSLTSQRECSKTVNTEALMTVFHPQNLETLNSKMLKEKMKEQSWKILFAECGRGVSMFRTKKTRDLVVRGIPETLRGELWMLFSGAVNDMATNPDYYTEVVEQSLGTCNLATEEIERDLRRSLPEHPAFQSDTGISALRRVLTAYAYRNPKIGYCQAMNILTSVLLLYAKEEEAFWLLVAVCERMLPDYFNRRIIGALVDQAVFEELIRDHLPQLTEHMTDMTFFSSVSLSWFLTLFISVLPIESAVNVVDCFFYDGIKAILQLGLAILDYNLDKLLTCKDDAEAVTALNRFFDNVTNKDSPLPSNVQQGSNVSDEKTSHTRVDITDLIRESNEKYGNIRYEDIHSMRCRNRLYVIQTLEETTKQNVLRVVSQDVKLSLQELDELYVIFKKELFLSCYWCLGCPVLKHHDPSLPYLEQYQIDCQQFRALYHLLSPWAHSANKDSLALWTFRLLDENSDCLINFKEFSSAIDIMYNGSFTEKLKLLFKLHIPPAYTEVKSKDASKGDELSKEELLYFSQLHVSKPANEKEAESAKHSPEKGKGKIDIQAYLSQWQDELFKKEENIKDLPRMNQSQFIQFSKTLYNLFHEDPEEESLYQAIAVVTSLLLRMEEVGRKLHSPTSSAKGFSGTVCGSGGPSEEKTGSHLEKDPCSFREEPQWSFAFEQILASLLNEPALVRFFEKPIDVKAKLENARISQLRSRTKM.

GRAM domains follow at residues 145–212 (LKFE…EKTS) and 285–353 (EQFN…DKTN). One can recognise a Rab-GAP TBC domain in the interval 487 to 674 (GIPETLRGEL…NVVDCFFYDG (188 aa)). Residues 858–893 (NKDSLALWTFRLLDENSDCLINFKEFSSAIDIMYNG) form the EF-hand domain. The tract at residues 1035–1066 (SPTSSAKGFSGTVCGSGGPSEEKTGSHLEKDP) is disordered. Basic and acidic residues predominate over residues 1054–1066 (SEEKTGSHLEKDP).

Interacts (via domain Rab-GAP TBC) with RAB11B (in GTP-bound form). In terms of tissue distribution, kidney (at protein level).

Its subcellular location is the cytoplasm. The protein localises to the cytosol. Involved in vesicular recycling, probably as a RAB11B GTPase-activating protein. The chain is TBC1 domain family member 8B (TBC1D8B) from Homo sapiens (Human).